The following is a 219-amino-acid chain: MTPSHPFLVGVTGGIGSGKSTLCRFLEKMGCELFEADKVARQLQVSDPEIMEGIKSLFGKDVYSKTRSGKLSLDRKRIAREVFSHPATLGALNNLIHPKVYNAFRQRALEAFGRGTAILVMEAAILFETGRAADLDFVVVVAADTETRIKRAVTRGLGTPEDIRKRIALQWPQEMLVARADYVVNNDIGKTKLKEEAGRLYSVLVEAAASGPDCQSKRR.

A DPCK domain is found at 8-215; that stretch reads LVGVTGGIGS…EAAASGPDCQ (208 aa). 16-21 lines the ATP pocket; that stretch reads GSGKST.

This sequence belongs to the CoaE family.

The protein resides in the cytoplasm. The catalysed reaction is 3'-dephospho-CoA + ATP = ADP + CoA + H(+). It participates in cofactor biosynthesis; coenzyme A biosynthesis; CoA from (R)-pantothenate: step 5/5. In terms of biological role, catalyzes the phosphorylation of the 3'-hydroxyl group of dephosphocoenzyme A to form coenzyme A. The sequence is that of Dephospho-CoA kinase from Chlorobium luteolum (strain DSM 273 / BCRC 81028 / 2530) (Pelodictyon luteolum).